Reading from the N-terminus, the 129-residue chain is Protein Turandot C (129 aa).

Residues 1–21 (MNASISLLCLALLLISPFCLG) form the signal peptide.

The protein belongs to the Turandot family.

It localises to the secreted. Functionally, a humoral factor that may play a role in stress tolerance. In Drosophila melanogaster (Fruit fly), this protein is Protein Turandot C.